The primary structure comprises 887 residues: Tubulin polyglutamylase TTLL7 (887 aa).

The segment at 1–21 is disordered; that stretch reads MPSLPQEGVIQGPSPLDLNTE. In terms of domain architecture, TTL spans 38–390; it reads KGTITANVAG…RTSDKRRNLA (353 aa). ATP-binding positions include lysine 160, 166–167, 188–191, and 201–203; these read MG, QEYI, and KFD. Arginine 227 contacts L-glutamate. Residue 249 to 250 participates in ATP binding; it reads TN. L-glutamate is bound by residues tyrosine 251, serine 252, and lysine 271. 3 residues coordinate Mg(2+): aspartate 336, glutamate 349, and asparagine 351. Lysine 367 provides a ligand contact to L-glutamate. Residues 388 to 450 are c-MTBD region; it reads NLAKQKAEAQ…ISREEHENRH (63 aa). Disordered stretches follow at residues 519-621 and 651-676; these read MGKT…TRPF and LPHSNDACSTNSQVSESLRQLKTKEQ. Over residues 548–560 the composition is skewed to low complexity; the sequence is SSDSSYDSSSSSS. Polar residues-rich tracts occupy residues 593–621 and 656–670; these read QQPSSIRRSVSCPRSISAQSPSSGDTRPF and DACSTNSQVSESLRQ.

The protein belongs to the tubulin--tyrosine ligase family. Interacts with both alpha- and beta-tubulin (via C-terminal tubulin tails). Mg(2+) is required as a cofactor. In terms of tissue distribution, highly expressed in the nervous system including spinal cord, thalamus, hippocampus, hypothalamus and cerebellum.

The protein resides in the cell projection. Its subcellular location is the cilium. It localises to the cytoplasm. The protein localises to the cytoskeleton. It is found in the cilium basal body. The protein resides in the dendrite. Its subcellular location is the perikaryon. It catalyses the reaction L-glutamyl-[protein] + L-glutamate + ATP = gamma-L-glutamyl-L-glutamyl-[protein] + ADP + phosphate + H(+). The catalysed reaction is (L-glutamyl)(n)-gamma-L-glutamyl-L-glutamyl-[protein] + L-glutamate + ATP = (L-glutamyl)(n+1)-gamma-L-glutamyl-L-glutamyl-[protein] + ADP + phosphate + H(+). Functionally, polyglutamylase which modifies tubulin, generating polyglutamate side chains of variable lengths on the gamma-carboxyl group of specific glutamate residues within the C-terminal tail of tubulin. Mediates both ATP-dependent initiation and elongation steps of the polyglutamylation reaction. Preferentially modifies the beta-tubulin tail over an alpha-tail. Competes with monoglycylase TTLL3 for modification site on beta-tubulin substrate, thereby creating an anticorrelation between glycylation and glutamylation reactions. Required for neurite growth; responsible for the strong increase in tubulin polyglutamylation during postnatal neuronal maturation. The sequence is that of Tubulin polyglutamylase TTLL7 from Homo sapiens (Human).